Reading from the N-terminus, the 663-residue chain is Probable peptidyl-glycine alpha-amidating monooxygenase pamn-1 (663 aa).

An N-terminal signal peptide occupies residues 1-21 (MNDRISINLIYLVLTFCCVSA). Residues 1 to 300 (MNDRISINLI…YDAKLDNPYP (300 aa)) form a peptidylglycine alpha-hydroxylating monooxygenase region. 2 residues coordinate Cu(2+): His-75 and His-76. Cys-82 and Cys-98 are oxidised to a cystine. Residue His-142 participates in Cu(2+) binding. Asn-191 is a glycosylation site (N-linked (GlcNAc...) asparagine). Cystine bridges form between Cys-194-Cys-305 and Cys-261-Cys-283. Residues His-210 and His-212 each coordinate Cu(2+). Asn-269 is a glycosylation site (N-linked (GlcNAc...) asparagine). Met-282 contributes to the Cu(2+) binding site. The tract at residues 301–663 (QGAICAKDYP…WQFKIRHDQN (363 aa)) is peptidyl-alpha-hydroxyglycine alpha-amidating lyase. An a protein-binding site is contributed by Arg-376. Asn-411 is a glycosylation site (N-linked (GlcNAc...) asparagine). 4 NHL repeats span residues 411-454 (NQTK…WKIE), 464-507 (SGEL…LDLN), 511-554 (IRQF…MTTQ), and 626-656 (FGQP…LWQF). Cys-478 and Cys-497 form a disulfide bridge. A protein contacts are provided by Tyr-496 and Arg-543.

The protein in the C-terminal section; belongs to the peptidyl-alpha-hydroxyglycine alpha-amidating lyase family. In the N-terminal section; belongs to the copper type II ascorbate-dependent monooxygenase family. Monomer. The cofactor is Zn(2+). Cu(2+) serves as cofactor.

It is found in the secreted. The enzyme catalyses a [peptide]-C-terminal glycine + 2 L-ascorbate + O2 = a [peptide]-C-terminal (2S)-2-hydroxyglycine + 2 monodehydro-L-ascorbate radical + H2O. The catalysed reaction is a [peptide]-C-terminal (2S)-2-hydroxyglycine = a [peptide]-C-terminal amide + glyoxylate. Its function is as follows. Probable bifunctional enzyme that catalyzes 2 sequential steps in C-terminal alpha-amidation of peptides. The monooxygenase part produces an unstable peptidyl(2-hydroxyglycine) intermediate that is dismutated to glyoxylate and the corresponding desglycine peptide amide by the lyase part. C-terminal amidation of peptides such as neuropeptides is essential for full biological activity. The protein is Probable peptidyl-glycine alpha-amidating monooxygenase pamn-1 of Caenorhabditis elegans.